Here is an 81-residue protein sequence, read N- to C-terminus: MAIRRRRRTFHRRKVCRFCVDSELKIDYKDSKTLRYFVTERGKIVPRRISGNCAKHQRELTLAVKRARQIALLPHTTIHNV.

This sequence belongs to the bacterial ribosomal protein bS18 family. Part of the 30S ribosomal subunit. Forms a tight heterodimer with protein bS6.

Functionally, binds as a heterodimer with protein bS6 to the central domain of the 16S rRNA, where it helps stabilize the platform of the 30S subunit. The chain is Small ribosomal subunit protein bS18 from Syntrophobacter fumaroxidans (strain DSM 10017 / MPOB).